The primary structure comprises 299 residues: Oxygen-dependent coproporphyrinogen-III oxidase (299 aa).

S92 serves as a coordination point for substrate. The a divalent metal cation site is built by H96 and H106. H106 (proton donor) is an active-site residue. Residue 108–110 (NVR) coordinates substrate. Residues H145 and H175 each contribute to the a divalent metal cation site. Residues 240 to 275 (YVEFNLVWDRGTLFGLQTGGRTESILMSMPPLVRWE) form an important for dimerization region. 258–260 (GGR) provides a ligand contact to substrate.

Belongs to the aerobic coproporphyrinogen-III oxidase family. As to quaternary structure, homodimer. A divalent metal cation is required as a cofactor.

The protein localises to the cytoplasm. It carries out the reaction coproporphyrinogen III + O2 + 2 H(+) = protoporphyrinogen IX + 2 CO2 + 2 H2O. It functions in the pathway porphyrin-containing compound metabolism; protoporphyrin-IX biosynthesis; protoporphyrinogen-IX from coproporphyrinogen-III (O2 route): step 1/1. Functionally, involved in the heme biosynthesis. Catalyzes the aerobic oxidative decarboxylation of propionate groups of rings A and B of coproporphyrinogen-III to yield the vinyl groups in protoporphyrinogen-IX. This chain is Oxygen-dependent coproporphyrinogen-III oxidase, found in Salmonella typhi.